Consider the following 232-residue polypeptide: Aquaporin Z (232 aa).

Helical transmembrane passes span 8 to 28 (AFGT…AAGF) and 33 to 53 (IGLL…AFAI). The NPA 1 motif lies at 62 to 64 (NPA). 3 helical membrane-spanning segments follow: residues 84–104 (IIAQ…IATG), 130–150 (MLAA…VIMG), and 159–179 (GFAP…SIPV). An NPA 2 motif is present at residues 185 to 187 (NPA). Residues 201-221 (VSQLWLFWVAPIVGGVLGAVI) form a helical membrane-spanning segment.

This sequence belongs to the MIP/aquaporin (TC 1.A.8) family. As to quaternary structure, homotetramer.

It localises to the cell inner membrane. It carries out the reaction H2O(in) = H2O(out). Its function is as follows. Channel that permits osmotically driven movement of water in both directions. It is involved in the osmoregulation and in the maintenance of cell turgor during volume expansion in rapidly growing cells. It mediates rapid entry or exit of water in response to abrupt changes in osmolarity. This Vibrio parahaemolyticus serotype O3:K6 (strain RIMD 2210633) protein is Aquaporin Z.